The chain runs to 157 residues: Small ribosomal subunit protein uS7 (157 aa).

It belongs to the universal ribosomal protein uS7 family. In terms of assembly, part of the 30S ribosomal subunit. Contacts proteins S9 and S11.

Its function is as follows. One of the primary rRNA binding proteins, it binds directly to 16S rRNA where it nucleates assembly of the head domain of the 30S subunit. Is located at the subunit interface close to the decoding center, probably blocks exit of the E-site tRNA. This Koribacter versatilis (strain Ellin345) protein is Small ribosomal subunit protein uS7.